The following is a 142-amino-acid chain: General odorant-binding protein 99a (142 aa).

Residues 1-16 (MKVFVAICVLIGLASA) form the signal peptide. Disulfide bonds link cysteine 33–cysteine 64, cysteine 60–cysteine 116, and cysteine 105–cysteine 125.

The protein belongs to the PBP/GOBP family. As to expression, expressed in larval chemosensory organ. Specifically expressed exclusively in a subset of chemosensory sensilla on the third antennal segment.

The protein localises to the secreted. Present in the aqueous fluid surrounding olfactory sensory dendrites and are thought to aid in the capture and transport of hydrophobic odorants into and through this fluid. The protein is General odorant-binding protein 99a (Obp99a) of Drosophila melanogaster (Fruit fly).